We begin with the raw amino-acid sequence, 267 residues long: 4-hydroxy-tetrahydrodipicolinate reductase (267 aa).

Residues 8–13 (GAGGRM) and Glu34 each bind NAD(+). Residue Arg35 participates in NADP(+) binding. Residues 98 to 100 (GTT) and 122 to 125 (APNM) contribute to the NAD(+) site. His155 functions as the Proton donor/acceptor in the catalytic mechanism. Residue His156 participates in (S)-2,3,4,5-tetrahydrodipicolinate binding. Residue Lys159 is the Proton donor of the active site. Residue 165 to 166 (GT) participates in (S)-2,3,4,5-tetrahydrodipicolinate binding.

Belongs to the DapB family.

The protein localises to the cytoplasm. It catalyses the reaction (S)-2,3,4,5-tetrahydrodipicolinate + NAD(+) + H2O = (2S,4S)-4-hydroxy-2,3,4,5-tetrahydrodipicolinate + NADH + H(+). It carries out the reaction (S)-2,3,4,5-tetrahydrodipicolinate + NADP(+) + H2O = (2S,4S)-4-hydroxy-2,3,4,5-tetrahydrodipicolinate + NADPH + H(+). The protein operates within amino-acid biosynthesis; L-lysine biosynthesis via DAP pathway; (S)-tetrahydrodipicolinate from L-aspartate: step 4/4. Its function is as follows. Catalyzes the conversion of 4-hydroxy-tetrahydrodipicolinate (HTPA) to tetrahydrodipicolinate. The polypeptide is 4-hydroxy-tetrahydrodipicolinate reductase (Thioalkalivibrio sulfidiphilus (strain HL-EbGR7)).